A 457-amino-acid polypeptide reads, in one-letter code: GTPase Der (457 aa).

EngA-type G domains are found at residues 4–169 (PTIA…PENN) and 177–352 (IMMS…NQHR). Residues 10-17 (GRPNVGKS), 57-61 (DTGGL), 120-123 (NKCE), 183-190 (GRPNVGKS), 230-234 (DTAGI), and 295-298 (NKWD) each bind GTP. Residues 353–438 (RRVTTSVVNE…PLILLWRGKQ (86 aa)) enclose the KH-like domain.

It belongs to the TRAFAC class TrmE-Era-EngA-EngB-Septin-like GTPase superfamily. EngA (Der) GTPase family. As to quaternary structure, associates with the 50S ribosomal subunit.

Functionally, GTPase that plays an essential role in the late steps of ribosome biogenesis. The chain is GTPase Der from Prochlorococcus marinus (strain AS9601).